The primary structure comprises 121 residues: Large ribosomal subunit protein bL12 (121 aa).

Belongs to the bacterial ribosomal protein bL12 family. In terms of assembly, homodimer. Part of the ribosomal stalk of the 50S ribosomal subunit. Forms a multimeric L10(L12)X complex, where L10 forms an elongated spine to which 2 to 4 L12 dimers bind in a sequential fashion. Binds GTP-bound translation factors.

Functionally, forms part of the ribosomal stalk which helps the ribosome interact with GTP-bound translation factors. Is thus essential for accurate translation. This Streptococcus uberis (strain ATCC BAA-854 / 0140J) protein is Large ribosomal subunit protein bL12.